The chain runs to 372 residues: L-selectin (372 aa).

An N-terminal signal peptide occupies residues 1–28 (MIFPRKCQSTQRDLWNIFKLWGWTMLCC). Positions 29 to 38 (DFLAHHGTDC) are excised as a propeptide. Topologically, residues 39–332 (WTYHYSENPM…FSMIKEGDYN (294 aa)) are extracellular. In terms of domain architecture, C-type lectin spans 55–155 (RFCRENYTDL…ACHKPKAALC (101 aa)). 10 cysteine pairs are disulfide-bonded: Cys-57/Cys-155, Cys-128/Cys-147, Cys-128/Cys-160, Cys-160/Cys-171, Cys-165/Cys-180, Cys-182/Cys-191, Cys-197/Cys-241, Cys-227/Cys-254, Cys-259/Cys-303, and Cys-289/Cys-316. 2 N-linked (GlcNAc...) asparagine glycosylation sites follow: Asn-60 and Asn-104. 5 residues coordinate Ca(2+): Glu-118, Asn-120, Glu-126, Asn-143, and Asp-144. The EGF-like domain occupies 156–192 (YTASCQPWSCSGHGECVEIINNYTCNCDVGYYGPQCQ). A glycan (N-linked (GlcNAc...) asparagine) is linked at Asn-177. Sushi domains are found at residues 195 to 256 (IQCE…TCQV) and 257 to 318 (IQCE…ICQK). N-linked (GlcNAc...) asparagine glycosylation is found at Asn-226, Asn-232, Asn-246, and Asn-271. The chain crosses the membrane as a helical span at residues 333-355 (PLFIPVAVMVTAFSGLAFIIWLA). Residues 356 to 372 (RRLKKGKKSKKSMDDPY) are Cytoplasmic-facing.

The protein belongs to the selectin/LECAM family. In terms of assembly, interaction with SELPLG/PSGL1 and PODXL2 is required for promoting recruitment and rolling of leukocytes. This interaction is dependent on the sialyl Lewis X glycan modification of SELPLG and PODXL2, and tyrosine sulfation modifications of SELPLG. Sulfation on 'Tyr-51' of SELPLG is important for L-selectin binding. N-glycosylated.

Its subcellular location is the cell membrane. In terms of biological role, calcium-dependent lectin that mediates cell adhesion by binding to glycoproteins on neighboring cells. Mediates the adherence of lymphocytes to endothelial cells of high endothelial venules in peripheral lymph nodes. Promotes initial tethering and rolling of leukocytes in endothelia. The chain is L-selectin (SELL) from Macaca mulatta (Rhesus macaque).